A 148-amino-acid chain; its full sequence is Endothelial differentiation-related factor 1 (148 aa).

A2 bears the N-acetylalanine mark. At S4 the chain carries Phosphoserine. Position 25 is an N6-methyllysine (K25). Basic and acidic residues predominate over residues 33–42; the sequence is RRGEDVETSK. Residues 33–66 form a disordered region; sequence RRGEDVETSKKWAAGQNKQHSITKNTAKLDRETE. Positions 37 to 113 are interaction with NR5A2, PPARG and NR1H3; that stretch reads DVETSKKWAA…QVIADYESGR (77 aa). Residues 48-58 show a composition bias toward polar residues; sequence QNKQHSITKNT. The segment at 69–108 is interaction with TBP and NR5A1; it reads HHDRVTLEVGKVIQQGRQSKGLTQKDLATKINEKPQVIAD. Residues 81–88 carry the IQ motif motif; the sequence is IQQGRQSK. In terms of domain architecture, HTH cro/C1-type spans 81–135; the sequence is IQQGRQSKGLTQKDLATKINEKPQVIADYESGRAIPNNQVLGKIERAIGLKLRGK. The H-T-H motif DNA-binding region spans 92 to 111; the sequence is QKDLATKINEKPQVIADYES.

As to quaternary structure, interacts with TBP and the transcription factor IID (TFIID) complex, NR5A2, NR1H3 and PPARG. Interaction with TBP is regulated by phosphorylation. Binds NR5A1, ATF1, FOS and JUN via their conserved basic region. Binding to calmodulin is regulated by calcium and phosphorylation of the IQ motif. Post-translationally, phosphorylated (by PKA and PKC). As to expression, expressed in brain, liver, lung, kidney and heart (at protein level). Ubiquitously expressed. More abundant in heart, pancreas, liver, intestine and adipose tissues.

The protein localises to the cytoplasm. The protein resides in the nucleus. Transcriptional coactivator stimulating NR5A1 and ligand-dependent NR1H3/LXRA and PPARG transcriptional activities. Enhances the DNA-binding activity of ATF1, ATF2, CREB1 and NR5A1. Regulates nitric oxid synthase activity probably by sequestering calmodulin in the cytoplasm. May function in endothelial cells differentiation, hormone-induced cardiomyocytes hypertrophy and lipid metabolism. This Homo sapiens (Human) protein is Endothelial differentiation-related factor 1 (EDF1).